Reading from the N-terminus, the 565-residue chain is MPLSAAIKSSLSVSVRADAKGLVGFANTGYNGITVLKQTYWTSFYMKGEYSGTVLLRLTGTDSGTVYGSRNLSVKSTGGKWTQYETTFEANESYVAENEWQLLFDAATAKGHPLHFGLVQLFPPTYKNRTNGLRNDIARPIADLKPKFLRFPGGNNIQADRPGDWHYPNTDALGLDEYLWWCEDMDMVPVLSVWDGKSYGGIVSGEELQPYLDDIKDELEVTLPLTLLSHPLRAYLTPNTNEQYLLGPPSTPFGALRARNGHPDPWPIQYIEIGNEDDYSGGCDTYPDRLVQIYDTIHASYPNLTLIANNMDENCLPEIPLPGLWHDYHYYRSADDLVAMFNYWDNHDRGDRVLVGEYGCRNDSNPDGVFWSFMQGSCAEAVHMIGLERNSDVVMMAAYAPLLQHFGYTQWSVCTPSASLAYLGIHPADRGEEQPTLFGFESRPNSLTLSTSYYVNRMFSTNQGSTVHKVHSTAGFGPLYWVATSNETAYQVKLANYGAANQTVNIRVPGVGRGVLEMISGPKDASNLPGDIKIVPVSRNIRAGKEGYTVHMPPWGVAVLVVVFK.

An N-terminal signal peptide occupies residues 1–19 (MPLSAAIKSSLSVSVRADA). Residues asparagine 71, asparagine 91, asparagine 128, asparagine 303, asparagine 362, asparagine 486, and asparagine 501 are each glycosylated (N-linked (GlcNAc...) asparagine).

This sequence belongs to the glycosyl hydrolase 51 family.

Its subcellular location is the secreted. It carries out the reaction Hydrolysis of terminal non-reducing alpha-L-arabinofuranoside residues in alpha-L-arabinosides.. The protein operates within glycan metabolism; L-arabinan degradation. Its function is as follows. Alpha-L-arabinofuranosidase involved in the degradation of arabinoxylan, a major component of plant hemicellulose. Acts only on small linear 1,5-alpha-linked L-arabinofuranosyl oligosaccharides. The polypeptide is Probable alpha-L-arabinofuranosidase A (abfA) (Emericella nidulans (strain FGSC A4 / ATCC 38163 / CBS 112.46 / NRRL 194 / M139) (Aspergillus nidulans)).